Consider the following 115-residue polypeptide: MEEKWKLSKKDTTASSSSSKSKFSRSFSTSASSTKSPIFVRSSSTKCSVPSSSSSSSSSSSISRSFSRKERRSSSSSSSSITQKYSSLAKEQKARFYIMRRCVAMLVCWHKHGDS.

Positions 1 to 12 (MEEKWKLSKKDT) are enriched in basic and acidic residues. The segment at 1 to 89 (MEEKWKLSKK…SITQKYSSLA (89 aa)) is disordered. Positions 13 to 65 (TASSSSSKSKFSRSFSTSASSTKSPIFVRSSSTKCSVPSSSSSSSSSSSISRS) are enriched in low complexity. The helical transmembrane segment at 44–63 (STKCSVPSSSSSSSSSSSIS) threads the bilayer. The interval 80 to 111 (SITQKYSSLAKEQKARFYIMRRCVAMLVCWHK) is required for DVL/RTFL small polypeptide activity.

Belongs to the DVL/RTFL small polypeptides family.

It is found in the cell membrane. Its function is as follows. Small polypeptide acting as a regulatory molecule which coordinates cellular responses required for differentiation, growth and development, probably by restricting polar cell proliferation in lateral organs and coordinating socket cell recruitment and differentiation at trichome sites. The polypeptide is Small polypeptide DEVIL 13 (Arabidopsis thaliana (Mouse-ear cress)).